Consider the following 353-residue polypeptide: Nicotinate-nucleotide--dimethylbenzimidazole phosphoribosyltransferase (353 aa).

The Proton acceptor role is filled by glutamate 319.

The protein belongs to the CobT family.

It catalyses the reaction 5,6-dimethylbenzimidazole + nicotinate beta-D-ribonucleotide = alpha-ribazole 5'-phosphate + nicotinate + H(+). It functions in the pathway nucleoside biosynthesis; alpha-ribazole biosynthesis; alpha-ribazole from 5,6-dimethylbenzimidazole: step 1/2. Its function is as follows. Catalyzes the synthesis of alpha-ribazole-5'-phosphate from nicotinate mononucleotide (NAMN) and 5,6-dimethylbenzimidazole (DMB). The sequence is that of Nicotinate-nucleotide--dimethylbenzimidazole phosphoribosyltransferase from Prosthecochloris aestuarii (strain DSM 271 / SK 413).